Here is a 193-residue protein sequence, read N- to C-terminus: dTTP/UTP pyrophosphatase (193 aa).

Aspartate 71 (proton acceptor) is an active-site residue.

Belongs to the Maf family. YhdE subfamily. A divalent metal cation serves as cofactor.

It localises to the cytoplasm. The enzyme catalyses dTTP + H2O = dTMP + diphosphate + H(+). It carries out the reaction UTP + H2O = UMP + diphosphate + H(+). Nucleoside triphosphate pyrophosphatase that hydrolyzes dTTP and UTP. May have a dual role in cell division arrest and in preventing the incorporation of modified nucleotides into cellular nucleic acids. This Citrifermentans bemidjiense (strain ATCC BAA-1014 / DSM 16622 / JCM 12645 / Bem) (Geobacter bemidjiensis) protein is dTTP/UTP pyrophosphatase.